A 194-amino-acid polypeptide reads, in one-letter code: Small ribosomal subunit protein uS7 (194 aa).

This sequence belongs to the universal ribosomal protein uS7 family. As to quaternary structure, part of the 30S ribosomal subunit.

In terms of biological role, one of the primary rRNA binding proteins, it binds directly to 16S rRNA where it nucleates assembly of the head domain of the 30S subunit. Is located at the subunit interface close to the decoding center. This is Small ribosomal subunit protein uS7 from Sulfurisphaera tokodaii (strain DSM 16993 / JCM 10545 / NBRC 100140 / 7) (Sulfolobus tokodaii).